A 469-amino-acid chain; its full sequence is Probable indole-3-acetic acid-amido synthetase GH3.13 (469 aa).

The disordered stretch occupies residues 1-26 (MTSTSSENAPDHDHDHDASSPAPATA). Residues 9–18 (APDHDHDHDA) show a composition bias toward basic and acidic residues.

This sequence belongs to the IAA-amido conjugating enzyme family.

May catalyze the synthesis of indole-3-acetic acid (IAA)-amino acid conjugates, providing a mechanism for the plant to cope with the presence of excess auxin. The polypeptide is Probable indole-3-acetic acid-amido synthetase GH3.13 (GH3.13) (Oryza sativa subsp. japonica (Rice)).